The primary structure comprises 187 residues: Calcium and integrin-binding family member 2 (187 aa).

EF-hand domains lie at Arg66–Ser101, Pro103–Ser138, and Glu144–Phe179. The Ca(2+) site is built by Asp116, Asn118, Asp120, Asp127, Asp157, Asp159, Asp161, Lys163, and Asp168.

As to quaternary structure, monomer. Homodimer. Interacts with WHRN and MYO7A. Interacts with ITGA2B (via C-terminus cytoplasmic tail region); this interaction is stabilized/increased in a calcium and magnesium-dependent manner. Interacts with ITGA7 (via C-terminus cytoplasmic tail region); this interaction is stabilized/increased in a calcium and magnesium-dependent manner. Interacts with TMC1. Interacts with TMC2. Interacts with PIEZO1. In terms of tissue distribution, expressed in inner and outer segments of photoreceptor cells, as well as in the pigmented epithelium. Also observed in the inner and outer plexiform layers and in the ganglion cell layer (at protein level). Expressed in sensory hair cell stereocilia, with expression mainly at the basal body of the kinocilium and in the hair bundle stereocilia; and the apical surface of hair cells (at protein level). Located in the tip region of the stereocilia and at the apical surface of hair cells around the cuticular plate (at protein level). Not expressed in the hair bundles of the vestibular hair cells. Strongly expressed in skeletal muscles, brain, kidney and liver. Expressed in the skeletal muscle, retina and cochlea. Expressed in megakaryocytes and endothelial cells. Expressed in heart, spleen, lung, and inner ear. In the inner ear, expressed in the vestibule, basilar membrane and spiral ganglion cells. Expressed in the supporting cells in both the organ of Corti and the vestibular sensory epithelia.

The protein resides in the cytoplasm. It is found in the cell projection. It localises to the stereocilium. Its subcellular location is the photoreceptor inner segment. The protein localises to the cilium. The protein resides in the photoreceptor outer segment. It is found in the cell membrane. It localises to the sarcolemma. Its function is as follows. Calcium- and integrin-binding protein that plays a role in intracellular calcium homeostasis. Acts as an auxiliary subunit of the sensory mechanoelectrical transduction (MET) channel in hair cells. Essential for mechanoelectrical transduction (MET) currents in auditory hair cells and thereby required for hearing. Regulates the function of hair cell mechanotransduction by controlling the distribution of transmembrane channel-like proteins TMC1 and TMC2, and by regulating the function of the MET channels in hair cells. Required for the maintenance of auditory hair cell stereocilia bundle morphology and function and for hair-cell survival in the cochlea. Critical for proper photoreceptor cell maintenance and function. Plays a role in intracellular calcium homeostasis by decreasing ATP-induced calcium release. Seems to be dispensable for vestibular functions. This chain is Calcium and integrin-binding family member 2 (Cib2), found in Mus musculus (Mouse).